The primary structure comprises 66 residues: Large ribosomal subunit protein bL35 (66 aa).

It belongs to the bacterial ribosomal protein bL35 family.

This Treponema denticola (strain ATCC 35405 / DSM 14222 / CIP 103919 / JCM 8153 / KCTC 15104) protein is Large ribosomal subunit protein bL35.